The following is a 585-amino-acid chain: Zinc finger protein 732 (585 aa).

In terms of domain architecture, KRAB spans 4–75 (LTFRDVAIEF…KIHETVAKHP (72 aa)). The segment at 141–163 (FQCNVHVKVFSTFSNSNQRRIRH) adopts a C2H2-type 1; degenerate zinc-finger fold. The segment at 167–189 (KHFKECGKSFQKFSDLTQHQGIH) adopts a C2H2-type 2; degenerate zinc-finger fold. Residues 195 to 217 (YTCEECGKDFKWYLIFNEYEIIH) form a C2H2-type 3; degenerate zinc finger. The C2H2-type 4 zinc-finger motif lies at 223–244 (FTCEECGNIFTTSSNFAKHKVH). The C2H2-type 5; degenerate zinc-finger motif lies at 250–272 (YKYEECGKAFNRSSTLTKHKRIH). 9 consecutive C2H2-type zinc fingers follow at residues 278-300 (FTCE…KKIH), 306-328 (YKCQ…NRIH), 334-356 (YTCE…KRIH), 362-384 (YKCE…KSIH), 390-412 (YTCE…KRIH), 418-440 (HKCE…KIIH), 446-468 (YKCE…KKIH), 474-496 (YRCE…KTIH), and 502-524 (YECE…KKIH). A C2H2-type 15; degenerate zinc finger spans residues 530 to 552 (YRCEECGKAFRRSRVLNKYKTIH). A C2H2-type 16; degenerate zinc finger spans residues 558-580 (PKCKGCGKAFKWSSYLNQHNKIY).

The protein belongs to the krueppel C2H2-type zinc-finger protein family.

It localises to the nucleus. In terms of biological role, may be involved in transcriptional regulation. The sequence is that of Zinc finger protein 732 (ZNF732) from Homo sapiens (Human).